A 366-amino-acid chain; its full sequence is CD44 antigen (366 aa).

The first 20 residues, 1–20, serve as a signal peptide directing secretion; that stretch reads MDTFWWRAAWGLCLVQLSLA. Residues 21–273 are Extracellular-facing; the sequence is QIDLNITCRY…GPMRKPQIPE (253 aa). Asparagine 25 carries N-linked (GlcNAc...) asparagine glycosylation. 3 disulfide bridges follow: cysteine 28/cysteine 129, cysteine 53/cysteine 118, and cysteine 77/cysteine 97. A Link domain is found at 32–120; the sequence is GVFHVEKNGR…TSQYDTICFN (89 aa). Arginine 41 is a binding site for hyaluronan. N-linked (GlcNAc...) asparagine glycosylation is present at asparagine 57. 2 residues coordinate hyaluronan: arginine 78 and tyrosine 79. Residue asparagine 100 is glycosylated (N-linked (GlcNAc...) asparagine). Tyrosine 105 is a hyaluronan binding site. N-linked (GlcNAc...) asparagine glycosylation is found at asparagine 110 and asparagine 120. A compositionally biased stretch (basic and acidic residues) spans 156–165; sequence TKKGEYRTNP. Positions 156–266 are disordered; sequence TKKGEYRTNP…HGANTTSGPM (111 aa). Residues 184–196 are compositionally biased toward low complexity; sequence SSGSPSERSTSGG. Serine 185 is a glycosylation site (O-linked (Xyl...) (chondroitin sulfate) serine). N-linked (GlcNAc...) asparagine glycosylation is present at asparagine 222. Positions 222–231 are enriched in basic and acidic residues; it reads NTSDTRDYGS. Residues 229–273 form a stem region; that stretch reads YGSSHDPSGRSYTTHASESAGHSSGSEEHGANTTSGPMRKPQIPE. Low complexity predominate over residues 243–252; the sequence is HASESAGHSS. A glycan (N-linked (GlcNAc...) asparagine) is linked at asparagine 260. The chain crosses the membrane as a helical span at residues 274 to 294; it reads WLIILASLLALALILAVCIAV. Residues 295–366 lie on the Cytoplasmic side of the membrane; that stretch reads NSRRRCGQKK…LQNVDMKIGV (72 aa). Serine 296 is modified (phosphoserine; by PKC). Positions 297-315 are required for interaction with EZR, MSN and RDX and for co-localization to microvilli; that stretch reads RRRCGQKKKLVINNGNGTM. The residue at position 314 (threonine 314) is a Phosphothreonine. Residues serine 321 and serine 330 each carry the phosphoserine modification.

Interacts with PKN2. Interacts with TIAM1 and TIAM2. Interacts with HA, as well as other glycosaminoglycans, collagen, laminin, and fibronectin via its N-terminal segment. Interacts with UNC119. Interacts with PDPN (via extracellular domain); this interaction is required for PDPN-mediated directional migration and regulation of lamellipodia extension/stabilization during cell spreading and migration. Interacts with RDX, EZR and MSN. Interacts with EGFR. Interacts with CD74; this complex is essential for the MIF-induced signaling cascade that results in B cell survival. N-glycosylated. In terms of processing, O-glycosylated; contains chondroitin sulfate glycans which can be more or less sulfated. Post-translationally, phosphorylated; activation of PKC results in the dephosphorylation of Ser-330 (constitutive phosphorylation site), and the phosphorylation of Ser-296. Mesenteric lymph node and liver, not in heart.

The protein resides in the cell membrane. It is found in the cell projection. Its subcellular location is the microvillus. The protein localises to the secreted. Its function is as follows. Cell-surface receptor that plays a role in cell-cell interactions, cell adhesion and migration, helping them to sense and respond to changes in the tissue microenvironment. Participates thereby in a wide variety of cellular functions including the activation, recirculation and homing of T-lymphocytes, hematopoiesis, inflammation and response to bacterial infection. Engages, through its ectodomain, extracellular matrix components such as hyaluronan/HA, collagen, growth factors, cytokines or proteases and serves as a platform for signal transduction by assembling, via its cytoplasmic domain, protein complexes containing receptor kinases and membrane proteases. Such effectors include PKN2, the RhoGTPases RAC1 and RHOA, Rho-kinases and phospholipase C that coordinate signaling pathways promoting calcium mobilization and actin-mediated cytoskeleton reorganization essential for cell migration and adhesion. This chain is CD44 antigen (CD44), found in Bos taurus (Bovine).